Here is a 51-residue protein sequence, read N- to C-terminus: Large ribosomal subunit protein eL39 (51 aa).

Belongs to the eukaryotic ribosomal protein eL39 family.

The protein is Large ribosomal subunit protein eL39 of Staphylothermus marinus (strain ATCC 43588 / DSM 3639 / JCM 9404 / F1).